Here is a 244-residue protein sequence, read N- to C-terminus: Cell division protein ZipA (244 aa).

The Periplasmic portion of the chain corresponds to 1–4; that stretch reads MSDM. A helical transmembrane segment spans residues 5-25; sequence AMIRIGILIAGLLLVAAIFLF. Residues 26-244 are Cytoplasmic-facing; sequence GRPKKSPQGR…APPLTKSPRW (219 aa). The disordered stretch occupies residues 30–91; the sequence is KSPQGRRVDK…GAGGNDVGKR (62 aa). Over residues 35-50 the composition is skewed to basic and acidic residues; the sequence is RRVDKDDTQPRERREP.

The protein belongs to the ZipA family. As to quaternary structure, interacts with FtsZ via their C-terminal domains.

It localises to the cell inner membrane. Its function is as follows. Essential cell division protein that stabilizes the FtsZ protofilaments by cross-linking them and that serves as a cytoplasmic membrane anchor for the Z ring. Also required for the recruitment to the septal ring of downstream cell division proteins. The sequence is that of Cell division protein ZipA from Xanthomonas campestris pv. campestris (strain ATCC 33913 / DSM 3586 / NCPPB 528 / LMG 568 / P 25).